A 188-amino-acid polypeptide reads, in one-letter code: Quinone reductase (188 aa).

FMN is bound by residues 13–20, 82–85, and serine 117; these read SLRKGSFN and EYNY.

The protein belongs to the SsuE family. As to quaternary structure, homotetramer. Dimer of dimers. The tetrameric configuration has a central role in chromate reductase activity. FMN serves as cofactor.

It carries out the reaction a quinone + NADH + H(+) = a quinol + NAD(+). The catalysed reaction is a quinone + NADPH + H(+) = a quinol + NADP(+). It catalyses the reaction Cr(6+) + 2 NADH + O2 = Cr(3+) + superoxide + 2 NAD(+) + 2 H(+). The enzyme catalyses Cr(6+) + 2 NADPH + O2 = Cr(3+) + superoxide + 2 NADP(+) + 2 H(+). In terms of biological role, catalyzes the reduction of quinones. Acts by simultaneous two-electron transfer, avoiding formation of highly reactive semiquinone intermediates and producing quinols that promote tolerance of H(2)O(2). Quinone reduction is probably the primary biological role of ChrR. Can also reduce toxic chromate to insoluble and less toxic Cr(3+). Catalyzes the transfer of three electrons to Cr(6+) producing Cr(3+) and one electron to molecular oxygen without producing the toxic Cr(5+) species and only producing a minimal amount of reactive oxygen species (ROS). Chromate reduction protects the cell against chromate toxicity, but is likely a secondary activity. The chain is Quinone reductase (chrR) from Escherichia coli O157:H7.